We begin with the raw amino-acid sequence, 363 residues long: 3-isopropylmalate dehydrogenase (363 aa).

78 to 91 (GPKWENLPPESQPE) is an NAD(+) binding site. Substrate is bound by residues Arg99, Arg109, Arg138, and Asp227. Residues Asp227, Asp251, and Asp255 each contribute to the Mg(2+) site. Residue 285–297 (GSAPDIAGKNIAN) coordinates NAD(+).

It belongs to the isocitrate and isopropylmalate dehydrogenases family. LeuB type 1 subfamily. In terms of assembly, homodimer. Mg(2+) is required as a cofactor. Mn(2+) serves as cofactor.

Its subcellular location is the cytoplasm. It catalyses the reaction (2R,3S)-3-isopropylmalate + NAD(+) = 4-methyl-2-oxopentanoate + CO2 + NADH. The protein operates within amino-acid biosynthesis; L-leucine biosynthesis; L-leucine from 3-methyl-2-oxobutanoate: step 3/4. Catalyzes the oxidation of 3-carboxy-2-hydroxy-4-methylpentanoate (3-isopropylmalate) to 3-carboxy-4-methyl-2-oxopentanoate. The product decarboxylates to 4-methyl-2 oxopentanoate. The chain is 3-isopropylmalate dehydrogenase from Salmonella paratyphi A (strain ATCC 9150 / SARB42).